Reading from the N-terminus, the 534-residue chain is ATP synthase subunit beta 2 (534 aa).

The segment covering 1-10 has biased composition (polar residues); the sequence is MADPQATNGT. The interval 1-30 is disordered; the sequence is MADPQATNGTGAACAERDASDVGDVSDVGD. 185 to 192 provides a ligand contact to ATP; that stretch reads GGAGVGKT. Positions 494–505 are enriched in basic and acidic residues; sequence AAAREADARREA. The disordered stretch occupies residues 494–534; sequence AAAREADARREAAAAASGAGPGTTSDPASGSAEPQGARHGR.

Belongs to the ATPase alpha/beta chains family. In terms of assembly, F-type ATPases have 2 components, CF(1) - the catalytic core - and CF(0) - the membrane proton channel. CF(1) has five subunits: alpha(3), beta(3), gamma(1), delta(1), epsilon(1). CF(0) has three main subunits: a(1), b(2) and c(9-12). The alpha and beta chains form an alternating ring which encloses part of the gamma chain. CF(1) is attached to CF(0) by a central stalk formed by the gamma and epsilon chains, while a peripheral stalk is formed by the delta and b chains.

It is found in the cell inner membrane. The catalysed reaction is ATP + H2O + 4 H(+)(in) = ADP + phosphate + 5 H(+)(out). Functionally, produces ATP from ADP in the presence of a proton gradient across the membrane. The catalytic sites are hosted primarily by the beta subunits. This Burkholderia pseudomallei (strain 668) protein is ATP synthase subunit beta 2.